Consider the following 221-residue polypeptide: Glutathione peroxidase 6 (221 aa).

The N-terminal stretch at 1–19 is a signal peptide; sequence MTQQFWGPCLFSLFMAVLA. The active site involves cysteine 73.

It belongs to the glutathione peroxidase family. As to expression, expressed in the Bowman glands.

It localises to the secreted. It carries out the reaction 2 glutathione + H2O2 = glutathione disulfide + 2 H2O. This is Glutathione peroxidase 6 (Gpx6) from Rattus norvegicus (Rat).